A 633-amino-acid polypeptide reads, in one-letter code: 1-deoxy-D-xylulose-5-phosphate synthase 2 (633 aa).

Residues His73 and Ser113–Ala115 contribute to the thiamine diphosphate site. Asp145 contributes to the Mg(2+) binding site. Residues Gly146 to Ala147, Asn175, Tyr286, and Glu367 each bind thiamine diphosphate. Asn175 is a binding site for Mg(2+).

The protein belongs to the transketolase family. DXPS subfamily. In terms of assembly, homodimer. Requires Mg(2+) as cofactor. It depends on thiamine diphosphate as a cofactor.

The catalysed reaction is D-glyceraldehyde 3-phosphate + pyruvate + H(+) = 1-deoxy-D-xylulose 5-phosphate + CO2. It functions in the pathway metabolic intermediate biosynthesis; 1-deoxy-D-xylulose 5-phosphate biosynthesis; 1-deoxy-D-xylulose 5-phosphate from D-glyceraldehyde 3-phosphate and pyruvate: step 1/1. In terms of biological role, catalyzes the acyloin condensation reaction between C atoms 2 and 3 of pyruvate and glyceraldehyde 3-phosphate to yield 1-deoxy-D-xylulose-5-phosphate (DXP). This is 1-deoxy-D-xylulose-5-phosphate synthase 2 from Kitasatospora griseola (Streptomyces griseolosporeus).